A 157-amino-acid chain; its full sequence is Protein Smg homolog (157 aa).

Belongs to the Smg family.

The protein is Protein Smg homolog of Aliivibrio salmonicida (strain LFI1238) (Vibrio salmonicida (strain LFI1238)).